The primary structure comprises 366 residues: Endophilin-B1 (366 aa).

Residues 1 to 30 (MNIMDFNMKKLAADAGTFLSRAVQFTEEKL) form a membrane-binding amphipathic helix region. The tract at residues 1 to 37 (MNIMDFNMKKLAADAGTFLSRAVQFTEEKLGQAEKTE) is required for membrane binding. One can recognise a BAR domain in the interval 27–261 (EEKLGQAEKT…LGSFPSTFLS (235 aa)). 2 coiled-coil regions span residues 34 to 54 (EKTE…CTKQ) and 160 to 185 (KERK…AKVA). Residues 306–366 (SGSRKARVLY…VPITYLELLN (61 aa)) enclose the SH3 domain.

Belongs to the endophilin family. In terms of assembly, homodimer, and heterodimer with SH3GLB2. Binds BAX. Binds DNM1, HTT, AMPH, BIN1 and ARFGAP1.

It localises to the cytoplasm. It is found in the golgi apparatus membrane. The protein localises to the mitochondrion outer membrane. Its function is as follows. May be required for normal outer mitochondrial membrane dynamics. Required for coatomer-mediated retrograde transport in certain cells. May recruit other proteins to membranes with high curvature. May promote membrane fusion. The polypeptide is Endophilin-B1 (Gallus gallus (Chicken)).